The primary structure comprises 825 residues: Phenylalanine--tRNA ligase beta subunit (825 aa).

Positions 39–154 (RTWADGVVLG…EAHPLGSDVR (116 aa)) constitute a tRNA-binding domain. The B5 domain maps to 411-506 (PLERTLKLRL…RLYGYDRFSE (96 aa)). Mg(2+)-binding residues include Asp484, Asp490, Glu493, and Glu494. The region spanning 731–824 (SPFPAADRDI…LATQFPVTLR (94 aa)) is the FDX-ACB domain.

It belongs to the phenylalanyl-tRNA synthetase beta subunit family. Type 1 subfamily. In terms of assembly, tetramer of two alpha and two beta subunits. Mg(2+) serves as cofactor.

Its subcellular location is the cytoplasm. It carries out the reaction tRNA(Phe) + L-phenylalanine + ATP = L-phenylalanyl-tRNA(Phe) + AMP + diphosphate + H(+). This is Phenylalanine--tRNA ligase beta subunit from Synechococcus sp. (strain JA-2-3B'a(2-13)) (Cyanobacteria bacterium Yellowstone B-Prime).